The sequence spans 75 residues: Small ribosomal subunit protein bS18 (75 aa).

Belongs to the bacterial ribosomal protein bS18 family. As to quaternary structure, part of the 30S ribosomal subunit. Forms a tight heterodimer with protein bS6.

Its function is as follows. Binds as a heterodimer with protein bS6 to the central domain of the 16S rRNA, where it helps stabilize the platform of the 30S subunit. This chain is Small ribosomal subunit protein bS18 (rbsR), found in Rhodobacter capsulatus (strain ATCC BAA-309 / NBRC 16581 / SB1003).